The sequence spans 904 residues: Alanine--tRNA ligase (904 aa).

Residues His-594, His-598, Cys-695, and His-699 each contribute to the Zn(2+) site.

The protein belongs to the class-II aminoacyl-tRNA synthetase family. The cofactor is Zn(2+).

It localises to the cytoplasm. It carries out the reaction tRNA(Ala) + L-alanine + ATP = L-alanyl-tRNA(Ala) + AMP + diphosphate. Functionally, catalyzes the attachment of alanine to tRNA(Ala) in a two-step reaction: alanine is first activated by ATP to form Ala-AMP and then transferred to the acceptor end of tRNA(Ala). Also edits incorrectly charged Ser-tRNA(Ala) and Gly-tRNA(Ala) via its editing domain. This chain is Alanine--tRNA ligase, found in Anaeromyxobacter sp. (strain Fw109-5).